Consider the following 153-residue polypeptide: Aspartate carbamoyltransferase regulatory chain (153 aa).

Zn(2+)-binding residues include cysteine 109, cysteine 114, cysteine 138, and cysteine 141.

It belongs to the PyrI family. As to quaternary structure, contains catalytic and regulatory chains. Requires Zn(2+) as cofactor.

Its function is as follows. Involved in allosteric regulation of aspartate carbamoyltransferase. The protein is Aspartate carbamoyltransferase regulatory chain of Salmonella arizonae (strain ATCC BAA-731 / CDC346-86 / RSK2980).